Reading from the N-terminus, the 904-residue chain is HTH-type transcriptional regulator MalT (904 aa).

39-46 (CPAGYGKT) contacts ATP. Residues 832–897 (ELIRTSPLTQ…EAVQQAQQLL (66 aa)) form the HTH luxR-type domain. The H-T-H motif DNA-binding region spans 856–875 (NDQIAGELAVAATTIKTHIR).

It belongs to the MalT family. As to quaternary structure, monomer in solution. Oligomerizes to an active state in the presence of the positive effectors ATP and maltotriose.

Activated by ATP and maltotriose, which are both required for DNA binding. In terms of biological role, positively regulates the transcription of the maltose regulon whose gene products are responsible for uptake and catabolism of malto-oligosaccharides. Specifically binds to the promoter region of its target genes, recognizing a short DNA motif called the MalT box. The polypeptide is HTH-type transcriptional regulator MalT (Serratia proteamaculans (strain 568)).